Here is a 516-residue protein sequence, read N- to C-terminus: AMP phosphorylase (516 aa).

Residues glycine 169, 195-200 (SRAITG), and threonine 204 each bind AMP. Aspartate 257 functions as the Proton donor in the catalytic mechanism. Serine 265 and lysine 289 together coordinate AMP.

This sequence belongs to the thymidine/pyrimidine-nucleoside phosphorylase family. Type 2 subfamily.

The enzyme catalyses AMP + phosphate = alpha-D-ribose 1,5-bisphosphate + adenine. It catalyses the reaction CMP + phosphate = cytosine + alpha-D-ribose 1,5-bisphosphate. The catalysed reaction is UMP + phosphate = alpha-D-ribose 1,5-bisphosphate + uracil. Functionally, catalyzes the conversion of AMP and phosphate to adenine and ribose 1,5-bisphosphate (R15P). Exhibits phosphorylase activity toward CMP and UMP in addition to AMP. Functions in an archaeal AMP degradation pathway, together with R15P isomerase and RubisCO. The chain is AMP phosphorylase from Methanospirillum hungatei JF-1 (strain ATCC 27890 / DSM 864 / NBRC 100397 / JF-1).